Consider the following 323-residue polypeptide: tRNA dimethylallyltransferase (323 aa).

13–20 is an ATP binding site; sequence GPTASGKT. Residue 15-20 coordinates substrate; sequence TASGKT. Interaction with substrate tRNA stretches follow at residues 42 to 45, 166 to 170, 251 to 256, and 284 to 291; these read DSAL, QRIQR, RCVGYR, and KRQITWLR.

It belongs to the IPP transferase family. As to quaternary structure, monomer. It depends on Mg(2+) as a cofactor.

The enzyme catalyses adenosine(37) in tRNA + dimethylallyl diphosphate = N(6)-dimethylallyladenosine(37) in tRNA + diphosphate. Its function is as follows. Catalyzes the transfer of a dimethylallyl group onto the adenine at position 37 in tRNAs that read codons beginning with uridine, leading to the formation of N6-(dimethylallyl)adenosine (i(6)A). This chain is tRNA dimethylallyltransferase, found in Acidovorax sp. (strain JS42).